A 268-amino-acid chain; its full sequence is Protein MGF 300-1L (268 aa).

At 1–175 (MVSLTTCCLK…QTFKTFYAKN (175 aa)) the chain is on the cytoplasmic side. Residues 176-193 (YSLSTLYCIFLAIYYKLY) form a helical membrane-spanning segment. At 194 to 268 (TALRKMVKIY…MYAFSQNDYW (75 aa)) the chain is on the extracellular side. An N-linked (GlcNAc...) asparagine; by host glycan is attached at Asn227.

It belongs to the asfivirus MGF 300 family.

It is found in the host membrane. Its function is as follows. Plays a role in virus cell tropism, and may be required for efficient virus replication in macrophages. This African swine fever virus (strain Badajoz 1971 Vero-adapted) (Ba71V) protein is Protein MGF 300-1L.